A 92-amino-acid chain; its full sequence is Small ribosomal subunit protein uS19 (92 aa).

This sequence belongs to the universal ribosomal protein uS19 family.

Its function is as follows. Protein S19 forms a complex with S13 that binds strongly to the 16S ribosomal RNA. This Prochlorococcus marinus (strain MIT 9312) protein is Small ribosomal subunit protein uS19.